We begin with the raw amino-acid sequence, 184 residues long: NADH dehydrogenase [ubiquinone] 1 alpha subcomplex assembly factor 3 (184 aa).

The protein belongs to the NDUFAF3 family. Interacts with NDUFAF4, NDUFS2 and NDUFS3.

It is found in the nucleus. The protein resides in the mitochondrion inner membrane. Its function is as follows. Essential factor for the assembly of mitochondrial NADH:ubiquinone oxidoreductase complex (complex I). This is NADH dehydrogenase [ubiquinone] 1 alpha subcomplex assembly factor 3 (NDUFAF3) from Homo sapiens (Human).